Consider the following 944-residue polypeptide: Translation initiation factor IF-2 (944 aa).

Disordered stretches follow at residues 61 to 157 (IQAN…KAKQ) and 173 to 281 (TQSN…SHKI). Over residues 132 to 150 (TFENQTPPTENTPKVVSHS) the composition is skewed to polar residues. Residues 175–185 (SNANNASNANN) show a composition bias toward low complexity. The span at 186–203 (AKKEISEVKKQEQEIKRH) shows a compositional bias: basic and acidic residues. A compositionally biased stretch (basic residues) spans 204-215 (ENIKRRTGFRVI). Residues 244-259 (EDIKKEWQEKDKQEAK) are compositionally biased toward basic and acidic residues. The tr-type G domain maps to 443–612 (ERPPVVTIMG…LIQAGIMELK (170 aa)). A G1 region spans residues 452–459 (GHVDHGKT). 452–459 (GHVDHGKT) serves as a coordination point for GTP. Residues 477 to 481 (GITQH) form a G2 region. Residues 498–501 (DTPG) are G3. GTP is bound by residues 498 to 502 (DTPGH) and 552 to 555 (NKMD). The segment at 552 to 555 (NKMD) is G4. The segment at 588–590 (SAK) is G5.

It belongs to the TRAFAC class translation factor GTPase superfamily. Classic translation factor GTPase family. IF-2 subfamily.

The protein localises to the cytoplasm. One of the essential components for the initiation of protein synthesis. Protects formylmethionyl-tRNA from spontaneous hydrolysis and promotes its binding to the 30S ribosomal subunits. Also involved in the hydrolysis of GTP during the formation of the 70S ribosomal complex. The polypeptide is Translation initiation factor IF-2 (infB) (Helicobacter pylori (strain ATCC 700392 / 26695) (Campylobacter pylori)).